A 293-amino-acid chain; its full sequence is Small ribosomal subunit biogenesis GTPase RsgA (293 aa).

One can recognise a CP-type G domain in the interval 63-223; the sequence is KNELVRPPIA…VADTPGFSSL (161 aa). GTP contacts are provided by residues 112 to 115 and 166 to 174; these read SKMD and GQSGVGKSS. Positions 247, 252, 254, and 260 each coordinate Zn(2+).

This sequence belongs to the TRAFAC class YlqF/YawG GTPase family. RsgA subfamily. In terms of assembly, monomer. Associates with 30S ribosomal subunit, binds 16S rRNA. The cofactor is Zn(2+).

The protein localises to the cytoplasm. Its function is as follows. One of several proteins that assist in the late maturation steps of the functional core of the 30S ribosomal subunit. Helps release RbfA from mature subunits. May play a role in the assembly of ribosomal proteins into the subunit. Circularly permuted GTPase that catalyzes slow GTP hydrolysis, GTPase activity is stimulated by the 30S ribosomal subunit. This Bacillus cereus (strain ATCC 10987 / NRS 248) protein is Small ribosomal subunit biogenesis GTPase RsgA.